Here is a 664-residue protein sequence, read N- to C-terminus: Probable LRR receptor-like serine/threonine-protein kinase At1g63430 (664 aa).

The first 22 residues, 1–22 (MRSKYFCSLALVLGLFFVSCDG), serve as a signal peptide directing secretion. At 23–288 (FASNEVQALR…KHHRASKPKW (266 aa)) the chain is on the extracellular side. The N-linked (GlcNAc...) asparagine glycan is linked to N75. LRR repeat units follow at residues 94–116 (YLQE…IGNL), 118–140 (NLKI…IGSL), 142–165 (GIMI…GNLK), and 166–178 (YLRE…NRLQ). The N-linked (GlcNAc...) asparagine glycan is linked to N197. The chain crosses the membrane as a helical span at residues 289–309 (LLALEIVTGSMVGLLLLVALF). Topologically, residues 310-664 (SAVHRWNNRS…LAWAELALDS (355 aa)) are cytoplasmic. Residues 360–642 (EDFSNIIGLS…ELCETLESRI (283 aa)) enclose the Protein kinase domain.

This sequence belongs to the protein kinase superfamily. Ser/Thr protein kinase family.

It localises to the cell membrane. The enzyme catalyses L-seryl-[protein] + ATP = O-phospho-L-seryl-[protein] + ADP + H(+). It carries out the reaction L-threonyl-[protein] + ATP = O-phospho-L-threonyl-[protein] + ADP + H(+). The protein is Probable LRR receptor-like serine/threonine-protein kinase At1g63430 of Arabidopsis thaliana (Mouse-ear cress).